Reading from the N-terminus, the 476-residue chain is Bifunctional protein GlmU (476 aa).

The pyrophosphorylase stretch occupies residues 1-235 (MTALDIIIMA…ALQVAGVNSP (235 aa)). Residues Lys-23, Gln-81, 86–87 (GT), 108–110 (SGD), Gly-145, Glu-160, and Asn-233 each bind UDP-N-acetyl-alpha-D-glucosamine. Asp-110 provides a ligand contact to Mg(2+). Asn-233 contacts Mg(2+). The tract at residues 236-256 (AQLADLERAHQRAQAAALMEQ) is linker. Positions 257-476 (GVRLADPARF…WKRPAKQAKG (220 aa)) are N-acetyltransferase. The UDP-N-acetyl-alpha-D-glucosamine site is built by Arg-351 and Lys-369. Residue His-381 is the Proton acceptor of the active site. 2 residues coordinate UDP-N-acetyl-alpha-D-glucosamine: Tyr-384 and Asn-395. Acetyl-CoA contacts are provided by residues Ala-398, 404–405 (NY), Ser-423, Gly-441, and Arg-458.

This sequence in the N-terminal section; belongs to the N-acetylglucosamine-1-phosphate uridyltransferase family. It in the C-terminal section; belongs to the transferase hexapeptide repeat family. As to quaternary structure, homotrimer. Requires Mg(2+) as cofactor.

It is found in the cytoplasm. It carries out the reaction alpha-D-glucosamine 1-phosphate + acetyl-CoA = N-acetyl-alpha-D-glucosamine 1-phosphate + CoA + H(+). It catalyses the reaction N-acetyl-alpha-D-glucosamine 1-phosphate + UTP + H(+) = UDP-N-acetyl-alpha-D-glucosamine + diphosphate. It participates in nucleotide-sugar biosynthesis; UDP-N-acetyl-alpha-D-glucosamine biosynthesis; N-acetyl-alpha-D-glucosamine 1-phosphate from alpha-D-glucosamine 6-phosphate (route II): step 2/2. Its pathway is nucleotide-sugar biosynthesis; UDP-N-acetyl-alpha-D-glucosamine biosynthesis; UDP-N-acetyl-alpha-D-glucosamine from N-acetyl-alpha-D-glucosamine 1-phosphate: step 1/1. The protein operates within bacterial outer membrane biogenesis; LPS lipid A biosynthesis. Its function is as follows. Catalyzes the last two sequential reactions in the de novo biosynthetic pathway for UDP-N-acetylglucosamine (UDP-GlcNAc). The C-terminal domain catalyzes the transfer of acetyl group from acetyl coenzyme A to glucosamine-1-phosphate (GlcN-1-P) to produce N-acetylglucosamine-1-phosphate (GlcNAc-1-P), which is converted into UDP-GlcNAc by the transfer of uridine 5-monophosphate (from uridine 5-triphosphate), a reaction catalyzed by the N-terminal domain. The chain is Bifunctional protein GlmU from Acidovorax sp. (strain JS42).